The chain runs to 62 residues: UPF0337 protein XCC0070 (62 aa).

Residues 32–62 (LEGAAEKNIGKVQRKAGELADDVRDATKSTR) are disordered.

It belongs to the UPF0337 (CsbD) family.

The polypeptide is UPF0337 protein XCC0070 (Xanthomonas campestris pv. campestris (strain ATCC 33913 / DSM 3586 / NCPPB 528 / LMG 568 / P 25)).